The following is a 225-amino-acid chain: Small ribosomal subunit protein uS7 (225 aa).

Belongs to the universal ribosomal protein uS7 family. In terms of assembly, component of the small ribosomal subunit. Mature ribosomes consist of a small (40S) and a large (60S) subunit. The 40S subunit contains about 32 different proteins and 1 molecule of RNA (18S). The 60S subunit contains 45 different proteins and 3 molecules of RNA (25S, 5.8S and 5S).

The protein localises to the cytoplasm. In terms of biological role, component of the ribosome, a large ribonucleoprotein complex responsible for the synthesis of proteins in the cell. The small ribosomal subunit (SSU) binds messenger RNAs (mRNAs) and translates the encoded message by selecting cognate aminoacyl-transfer RNA (tRNA) molecules. The large subunit (LSU) contains the ribosomal catalytic site termed the peptidyl transferase center (PTC), which catalyzes the formation of peptide bonds, thereby polymerizing the amino acids delivered by tRNAs into a polypeptide chain. The nascent polypeptides leave the ribosome through a tunnel in the LSU and interact with protein factors that function in enzymatic processing, targeting, and the membrane insertion of nascent chains at the exit of the ribosomal tunnel. This Candida albicans (strain SC5314 / ATCC MYA-2876) (Yeast) protein is Small ribosomal subunit protein uS7 (RPS5).